A 212-amino-acid polypeptide reads, in one-letter code: Adenine phosphoribosyltransferase (212 aa).

The protein belongs to the purine/pyrimidine phosphoribosyltransferase family. As to quaternary structure, homodimer.

The protein resides in the cytoplasm. It carries out the reaction AMP + diphosphate = 5-phospho-alpha-D-ribose 1-diphosphate + adenine. It participates in purine metabolism; AMP biosynthesis via salvage pathway; AMP from adenine: step 1/1. Catalyzes a salvage reaction resulting in the formation of AMP, that is energically less costly than de novo synthesis. The chain is Adenine phosphoribosyltransferase from Mycobacterium tuberculosis (strain ATCC 25618 / H37Rv).